A 474-amino-acid chain; its full sequence is Synaptotagmin-15B (474 aa).

2 disordered regions span residues 1 to 62 and 75 to 128; these read MGVV…AASG and PRAA…PPAV. Over residues 75–88 the composition is skewed to low complexity; it reads PRAAAGHQQHHGPP. C2 domains are found at residues 200–317 and 331–452; these read CLGR…RRVI and EFGD…EHWD.

Belongs to the synaptotagmin family.

The polypeptide is Synaptotagmin-15B (Homo sapiens (Human)).